The chain runs to 323 residues: Ubiquinone biosynthesis protein COQ4, mitochondrial (323 aa).

The Zn(2+) site is built by histidine 205, aspartate 206, histidine 209, and glutamate 221.

It belongs to the COQ4 family. As to quaternary structure, component of a multi-subunit COQ enzyme complex, composed of at least COQ3, COQ4, COQ5, COQ6, COQ7 and COQ9. The cofactor is Zn(2+).

It localises to the mitochondrion inner membrane. It carries out the reaction a 4-hydroxy-3-methoxy-5-(all-trans-polyprenyl)benzoate + H(+) = a 2-methoxy-6-(all-trans-polyprenyl)phenol + CO2. The protein operates within cofactor biosynthesis; ubiquinone biosynthesis. In terms of biological role, lyase that catalyzes the C1-decarboxylation of 4-hydroxy-3-methoxy-5-(all-trans-polyprenyl)benzoic acid into 2-methoxy-6-(all-trans-polyprenyl)phenol during ubiquinone biosynthesis. This chain is Ubiquinone biosynthesis protein COQ4, mitochondrial, found in Candida albicans (strain SC5314 / ATCC MYA-2876) (Yeast).